The following is a 309-amino-acid chain: Ketosamine-3-kinase (309 aa).

At Ser20 the chain carries Phosphoserine. Position 89–91 (89–91 (EHL)) interacts with ATP. Asp217 functions as the Proton acceptor in the catalytic mechanism.

It belongs to the fructosamine kinase family.

It catalyses the reaction N(6)-D-ribulosyl-L-lysyl-[protein] + ATP = N(6)-(3-O-phospho-D-ribulosyl)-L-lysyl-[protein] + ADP + H(+). The enzyme catalyses N(6)-(D-psicosyl)-L-lysyl-[protein] + ATP = N(6)-(3-O-phospho-D-psicosyl)-L-lysyl-[protein] + ADP + H(+). In terms of biological role, ketosamine-3-kinase involved in protein deglycation by mediating phosphorylation of ribuloselysine and psicoselysine on glycated proteins, to generate ribuloselysine-3 phosphate and psicoselysine-3 phosphate, respectively. Ribuloselysine-3 phosphate and psicoselysine-3 phosphate adducts are unstable and decompose under physiological conditions. Not able to phosphorylate fructoselysine. The polypeptide is Ketosamine-3-kinase (Mus musculus (Mouse)).